The following is a 261-amino-acid chain: 5'-nucleotidase SurE (261 aa).

A divalent metal cation contacts are provided by Asp8, Asp9, Ser39, and Asn91.

This sequence belongs to the SurE nucleotidase family. A divalent metal cation is required as a cofactor.

The protein resides in the cytoplasm. It catalyses the reaction a ribonucleoside 5'-phosphate + H2O = a ribonucleoside + phosphate. Its function is as follows. Nucleotidase that shows phosphatase activity on nucleoside 5'-monophosphates. This Polaromonas sp. (strain JS666 / ATCC BAA-500) protein is 5'-nucleotidase SurE.